The sequence spans 237 residues: 2-C-methyl-D-erythritol 4-phosphate cytidylyltransferase (237 aa).

This sequence belongs to the IspD/TarI cytidylyltransferase family. IspD subfamily.

It catalyses the reaction 2-C-methyl-D-erythritol 4-phosphate + CTP + H(+) = 4-CDP-2-C-methyl-D-erythritol + diphosphate. It functions in the pathway isoprenoid biosynthesis; isopentenyl diphosphate biosynthesis via DXP pathway; isopentenyl diphosphate from 1-deoxy-D-xylulose 5-phosphate: step 2/6. Functionally, catalyzes the formation of 4-diphosphocytidyl-2-C-methyl-D-erythritol from CTP and 2-C-methyl-D-erythritol 4-phosphate (MEP). The protein is 2-C-methyl-D-erythritol 4-phosphate cytidylyltransferase of Acidithiobacillus ferrooxidans (strain ATCC 23270 / DSM 14882 / CIP 104768 / NCIMB 8455) (Ferrobacillus ferrooxidans (strain ATCC 23270)).